Here is a 248-residue protein sequence, read N- to C-terminus: Eukaryotic translation initiation factor 6 (248 aa).

It belongs to the eIF-6 family. As to quaternary structure, monomer. Associates with the 60S ribosomal subunit.

It is found in the cytoplasm. The protein localises to the nucleus. Its subcellular location is the nucleolus. Functionally, binds to the 60S ribosomal subunit and prevents its association with the 40S ribosomal subunit to form the 80S initiation complex in the cytoplasm. May also be involved in ribosome biogenesis. The protein is Eukaryotic translation initiation factor 6 of Trypanosoma cruzi (strain CL Brener).